The chain runs to 280 residues: Pantothenate synthetase (280 aa).

30 to 37 contributes to the ATP binding site; sequence MGALHEGH. His37 functions as the Proton donor in the catalytic mechanism. Gln61 provides a ligand contact to (R)-pantoate. Gln61 is a binding site for beta-alanine. Residue 147–150 coordinates ATP; that stretch reads GQKD. Residue Gln153 coordinates (R)-pantoate. Residues Val176 and 184-187 contribute to the ATP site; that span reads MSSR.

It belongs to the pantothenate synthetase family. As to quaternary structure, homodimer.

The protein resides in the cytoplasm. The enzyme catalyses (R)-pantoate + beta-alanine + ATP = (R)-pantothenate + AMP + diphosphate + H(+). It participates in cofactor biosynthesis; (R)-pantothenate biosynthesis; (R)-pantothenate from (R)-pantoate and beta-alanine: step 1/1. In terms of biological role, catalyzes the condensation of pantoate with beta-alanine in an ATP-dependent reaction via a pantoyl-adenylate intermediate. In Thermodesulfovibrio yellowstonii (strain ATCC 51303 / DSM 11347 / YP87), this protein is Pantothenate synthetase.